The following is a 334-amino-acid chain: Probable aminoacyl tRNA synthase complex-interacting multifunctional protein 2 (334 aa).

The region spanning 280-327 (LDKRLQKQQYFGGSQMSVADVGVYSSLIRMPAVTEKDLTPALVAWRKR) is the GST C-terminal domain.

Component of the aminoacyl-tRNA synthase complex which is comprised of a bifunctional glutamyl-prolyl-tRNA synthase, the monospecific isoleucyl, leucyl, glutaminyl, methionyl, lysyl, arginyl and aspartyl-tRNA synthases, and three auxiliary proteins.

It localises to the cytoplasm. It is found in the cytosol. The protein resides in the nucleus. In terms of biological role, required for assembly and stability of the aminoacyl-tRNA synthase complex. The polypeptide is Probable aminoacyl tRNA synthase complex-interacting multifunctional protein 2 (Drosophila melanogaster (Fruit fly)).